The chain runs to 355 residues: Phosphatidylinositol:ceramide inositolphosphotransferase (355 aa).

Topologically, residues 1 to 44 (MISYPFFSLSPPGLVPPPMAVPPVEMYSGSFWNRMRKPLPLRTQ) are cytoplasmic. Residues 45–65 (VIRFTVVFVIVSFILAVALQI) form a helical membrane-spanning segment. The Extracellular portion of the chain corresponds to 66 to 89 (THERMPDPKVTKPLPDLGFELLTK). Residues 90-110 (ISFLSVVTDVLIAFLSSLSFF) form a helical membrane-spanning segment. Topologically, residues 111–165 (TLWKLYLLHRHCVGSGEPELPCNIPGVSRFFLSVWLCKENCRIELRNVHTIAWIR) are cytoplasmic. A helical membrane pass occupies residues 166–186 (FITSYALLLLFRSLVIVMTSM). Residues 187–205 (PTPVDKCQNPPKIENPVKN) lie on the Extracellular side of the membrane. A helical transmembrane segment spans residues 206–226 (VILTVLTAGGGSIHCGDLMYS). Over 227–251 (GHTVILTLHLMFHWIYGAMVHWSFR) the chain is Cytoplasmic. Active-site residues include His228, His271, and Asp275. The helical transmembrane segment at 252–272 (PVVTVVAIFGYYCIVASRSHY) threads the bilayer. Residues 273-275 (TDD) lie on the Extracellular side of the membrane. A helical membrane pass occupies residues 276–296 (VLVAIYLTIATFIAVGHNADG). Residues 297-355 (APWQLQLFIRWLPCCGANSREVTEDSQPVMVAFKSEAVDELRERDDSAGLSCEVSTNEV) are Cytoplasmic-facing.

It belongs to the sphingomyelin synthase family.

It is found in the membrane. Its function is as follows. Bidirectional lipid inositolphosphotransferase capable of converting phosphatidylinositol (PI) and ceramide to inositol-phosphorylceramide (IPC) and diacylglycerol (DAG) and vice versa. Direction is dependent on the relative concentrations of DAG and ceramide as phosphoinositol acceptors. Does not function strictly as a SM synthase. Essential for viability of the pathogenic bloodstream stage of this human protozoan parasite and, consequently, can be considered as potential drug target. This is Phosphatidylinositol:ceramide inositolphosphotransferase from Trypanosoma brucei brucei (strain 927/4 GUTat10.1).